Reading from the N-terminus, the 443-residue chain is Glutamate-1-semialdehyde 2,1-aminomutase (443 aa).

Lys281 carries the N6-(pyridoxal phosphate)lysine modification.

This sequence belongs to the class-III pyridoxal-phosphate-dependent aminotransferase family. HemL subfamily. As to quaternary structure, homodimer. Pyridoxal 5'-phosphate serves as cofactor.

It is found in the cytoplasm. It catalyses the reaction (S)-4-amino-5-oxopentanoate = 5-aminolevulinate. It functions in the pathway porphyrin-containing compound metabolism; protoporphyrin-IX biosynthesis; 5-aminolevulinate from L-glutamyl-tRNA(Glu): step 2/2. The chain is Glutamate-1-semialdehyde 2,1-aminomutase from Leptospira interrogans serogroup Icterohaemorrhagiae serovar Lai (strain 56601).